Consider the following 1224-residue polypeptide: Integrin alpha pat-2 (1224 aa).

The first 27 residues, 1–27, serve as a signal peptide directing secretion; it reads MREGSFPRRTRLLCLLAAVVLISTVTS. Residues 28–1153 lie on the Extracellular side of the membrane; that stretch reads FNIDTKNVVL…ASEEGRDLPW (1126 aa). FG-GAP repeat units lie at residues 29 to 96, 110 to 173, 180 to 235, 236 to 292, 293 to 347, 364 to 423, and 427 to 490; these read NIDT…TCRE, NGSH…KTEE, EPAR…TDRP, NTEY…MMIN, LTDE…KPQY, GKQL…GVRE, and QKIE…PESA. Asparagine 74, asparagine 110, asparagine 230, and asparagine 292 each carry an N-linked (GlcNAc...) asparagine glycan. An N-linked (GlcNAc...) asparagine glycan is attached at asparagine 610. The Cell attachment site motif lies at 622–624; the sequence is RGD. Residues asparagine 681, asparagine 775, and asparagine 819 are each glycosylated (N-linked (GlcNAc...) asparagine). 2 disordered regions span residues 898 to 968 and 981 to 1037; these read LRIT…QNTG and DYEY…KARF. Acidic residues predominate over residues 920-931; the sequence is REEDDESYEDET. A compositionally biased stretch (basic and acidic residues) spans 955–964; it reads VYERDEDKIR. Acidic residues predominate over residues 984–1003; that stretch reads YIPDDQEYDGDDFEDDDEDF. Basic residues predominate over residues 1008–1023; that stretch reads SKRVKRAPVPKKKKKE. Residues 1024–1037 are compositionally biased toward basic and acidic residues; it reads GSRSGEPRSDKARF. A helical membrane pass occupies residues 1154-1174; sequence WLYLLAILIGLAILILLILLL. Residues 1175-1224 lie on the Cytoplasmic side of the membrane; it reads WRCGFFKRNRPPTEHAELRAEKQPAAHYADTQSRYAPQDQYSQGRHGQML. Residues 1190–1224 are disordered; it reads AELRAEKQPAAHYADTQSRYAPQDQYSQGRHGQML. The segment covering 1204–1224 has biased composition (polar residues); it reads DTQSRYAPQDQYSQGRHGQML.

The protein belongs to the integrin alpha chain family. Heterodimer of an alpha and a beta subunit. Alpha pat-2 associates with beta pat-3.

It is found in the membrane. Required for muscle development probably through the regulation of the actin-myosin cytoskeleton. During the formation of neuromuscular junctions at the larval stage, negatively regulates membrane protrusion from body wall muscles, probably through lamins such as epi-1, lam-2 and unc-52. Required for distal tip cell migration and dorsal pathfinding. Required for egg-laying. May play a role in cell motility and cell-cell interactions. This Caenorhabditis briggsae protein is Integrin alpha pat-2.